The primary structure comprises 703 residues: Polyribonucleotide nucleotidyltransferase (703 aa).

Residues Asp-482 and Asp-488 each contribute to the Mg(2+) site. Residues 549-607 form the KH domain; that stretch reads PKAQVMKIPEDKVGLVIGPAGKNIKYIKEQFGASVWIDGANAYINAPTIEAVNKAADFI. In terms of domain architecture, S1 motif spans 617 to 679; the sequence is GGVYEGKVIR…EQNRLNLCSP (63 aa). The segment at 677-703 is disordered; it reads CSPDYQKPENQERPRKEQLNRKPHHRK. Over residues 682-696 the composition is skewed to basic and acidic residues; that stretch reads QKPENQERPRKEQLN.

It belongs to the polyribonucleotide nucleotidyltransferase family. Mg(2+) is required as a cofactor.

It localises to the cytoplasm. The catalysed reaction is RNA(n+1) + phosphate = RNA(n) + a ribonucleoside 5'-diphosphate. Functionally, involved in mRNA degradation. Catalyzes the phosphorolysis of single-stranded polyribonucleotides processively in the 3'- to 5'-direction. The polypeptide is Polyribonucleotide nucleotidyltransferase (Hydrogenobaculum sp. (strain Y04AAS1)).